The sequence spans 179 residues: Negative modulator of initiation of replication (179 aa).

This sequence belongs to the SeqA family. In terms of assembly, homodimer. Polymerizes to form helical filaments.

The protein localises to the cytoplasm. In terms of biological role, negative regulator of replication initiation, which contributes to regulation of DNA replication and ensures that replication initiation occurs exactly once per chromosome per cell cycle. Binds to pairs of hemimethylated GATC sequences in the oriC region, thus preventing assembly of replication proteins and re-initiation at newly replicated origins. Repression is relieved when the region becomes fully methylated. The protein is Negative modulator of initiation of replication of Vibrio atlanticus (strain LGP32) (Vibrio splendidus (strain Mel32)).